Consider the following 483-residue polypeptide: tRNA sulfurtransferase (483 aa).

Residues 61-165 (AEVLEILTTT…DELLNQVIAR (105 aa)) enclose the THUMP domain. Residues 183 to 184 (LI), K265, G287, and Q296 each bind ATP. Residues C344 and C457 are joined by a disulfide bond. The 79-residue stretch at 405-483 (EEGNAVVLDI…GFNNVKVYRP (79 aa)) folds into the Rhodanese domain. C457 (cysteine persulfide intermediate) is an active-site residue.

It belongs to the ThiI family.

It is found in the cytoplasm. The catalysed reaction is [ThiI sulfur-carrier protein]-S-sulfanyl-L-cysteine + a uridine in tRNA + 2 reduced [2Fe-2S]-[ferredoxin] + ATP + H(+) = [ThiI sulfur-carrier protein]-L-cysteine + a 4-thiouridine in tRNA + 2 oxidized [2Fe-2S]-[ferredoxin] + AMP + diphosphate. It carries out the reaction [ThiS sulfur-carrier protein]-C-terminal Gly-Gly-AMP + S-sulfanyl-L-cysteinyl-[cysteine desulfurase] + AH2 = [ThiS sulfur-carrier protein]-C-terminal-Gly-aminoethanethioate + L-cysteinyl-[cysteine desulfurase] + A + AMP + 2 H(+). It participates in cofactor biosynthesis; thiamine diphosphate biosynthesis. In terms of biological role, catalyzes the ATP-dependent transfer of a sulfur to tRNA to produce 4-thiouridine in position 8 of tRNAs, which functions as a near-UV photosensor. Also catalyzes the transfer of sulfur to the sulfur carrier protein ThiS, forming ThiS-thiocarboxylate. This is a step in the synthesis of thiazole, in the thiamine biosynthesis pathway. The sulfur is donated as persulfide by IscS. The polypeptide is tRNA sulfurtransferase (Vibrio cholerae serotype O1 (strain ATCC 39315 / El Tor Inaba N16961)).